An 89-amino-acid chain; its full sequence is Small ribosomal subunit protein uS15 (89 aa).

Belongs to the universal ribosomal protein uS15 family. As to quaternary structure, part of the 30S ribosomal subunit. Forms a bridge to the 50S subunit in the 70S ribosome, contacting the 23S rRNA.

Its function is as follows. One of the primary rRNA binding proteins, it binds directly to 16S rRNA where it helps nucleate assembly of the platform of the 30S subunit by binding and bridging several RNA helices of the 16S rRNA. In terms of biological role, forms an intersubunit bridge (bridge B4) with the 23S rRNA of the 50S subunit in the ribosome. This is Small ribosomal subunit protein uS15 from Bifidobacterium animalis subsp. lactis (strain AD011).